Here is a 470-residue protein sequence, read N- to C-terminus: Pyoverdine export outer membrane protein OpmQ (470 aa).

An N-terminal signal peptide occupies residues 1–18; sequence MTLPRHLCLLPLSLSLLA. Cys-19 is lipidated: N-palmitoyl cysteine. Cys-19 is lipidated: S-diacylglycerol cysteine.

The protein belongs to the outer membrane factor (OMF) (TC 1.B.17) family. As to quaternary structure, part of the tripartite efflux system PvdRT-OpmQ, which is composed of an inner membrane component with both ATPase and permease domains, PvdT, a periplasmic membrane fusion protein, PvdR, and an outer membrane component, OpmQ.

The protein localises to the cell outer membrane. Its function is as follows. Part of the tripartite efflux system PvdRT-OpmQ required for the secretion into the extracellular milieu of the siderophore pyoverdine (PVD), which is involved in iron acquisition. The system is responsible for export of newly synthesized PVD after the final steps of biosynthesis have taken place in the periplasm. It is also responsible for recycling of PVD after internalization of ferri-PVD into the periplasm by the outer-membrane receptor FpvA and release of iron from PVD, thus making PVD available for new cycles of iron uptake. Contributes to resistance against ampicillin. This is Pyoverdine export outer membrane protein OpmQ from Pseudomonas putida (strain ATCC 47054 / DSM 6125 / CFBP 8728 / NCIMB 11950 / KT2440).